Reading from the N-terminus, the 212-residue chain is Protein Thf1 (212 aa).

Residues 179 to 201 (ERMEQAVELMQETLAADRRKKEK) adopt a coiled-coil conformation.

It belongs to the THF1 family.

In terms of biological role, may be involved in photosynthetic membrane biogenesis. This Parasynechococcus marenigrum (strain WH8102) protein is Protein Thf1.